Reading from the N-terminus, the 382-residue chain is Chaperone protein DnaJ (382 aa).

Residues 5–70 (DYYEVLGVSR…DKKAAYDRYG (66 aa)) form the J domain. Residues 141-219 (GVQKTINVPA…CHGAGRVEKE (79 aa)) form a CR-type zinc finger. Residues C154, C157, C171, C174, C193, C196, C207, and C210 each coordinate Zn(2+). CXXCXGXG motif repeat units follow at residues 154–161 (CDACKGTG), 171–178 (CPTCSGMG), 193–200 (CPTCNGMG), and 207–214 (CKVCHGAG).

The protein belongs to the DnaJ family. As to quaternary structure, homodimer. Zn(2+) serves as cofactor.

It is found in the cytoplasm. Participates actively in the response to hyperosmotic and heat shock by preventing the aggregation of stress-denatured proteins and by disaggregating proteins, also in an autonomous, DnaK-independent fashion. Unfolded proteins bind initially to DnaJ; upon interaction with the DnaJ-bound protein, DnaK hydrolyzes its bound ATP, resulting in the formation of a stable complex. GrpE releases ADP from DnaK; ATP binding to DnaK triggers the release of the substrate protein, thus completing the reaction cycle. Several rounds of ATP-dependent interactions between DnaJ, DnaK and GrpE are required for fully efficient folding. Also involved, together with DnaK and GrpE, in the DNA replication of plasmids through activation of initiation proteins. In Cereibacter sphaeroides (strain ATCC 17029 / ATH 2.4.9) (Rhodobacter sphaeroides), this protein is Chaperone protein DnaJ.